The following is a 427-amino-acid chain: MSAIVDIIGREILDSRGNPTVECDVLLESGTMGRAAVPSGASTGSREAIELRDGEAGRYGGKGVLKAVEHINTEISEAIMGLDASEQAFLDKTLLELDGTDNKSRLGANAMLAVSMAVAKAAAEEAGLPLYRYFGGSGAMQLPVPMMNIVNGGAHANNSLDIQEFMIVPVSQPTFREALRCGAEVFHALKKILSDRGMSTAVGDEGGFAPNFGSNDECLSTILQAIEKAGYRAGEDVLLALDCAASEFYHDGKYQLAGEGLQLSSAEFADYLATLADKFPIVSIEDGMHEGDWEGWKLLTDKLGKKIQLVGDDLFVTNTRILKEGIEKGIANSILIKINQIGTLTETFAAIEMAKRAGYTAVISHRSGETEDSTIADIAVGLNAGQIKTGSLSRSDRISKYNQLLRIEEDLGDIASYPGKSAFYNLR.

(2R)-2-phosphoglycerate is bound at residue Gln163. Glu205 (proton donor) is an active-site residue. Mg(2+) is bound by residues Asp242, Glu285, and Asp312. (2R)-2-phosphoglycerate contacts are provided by Lys337, Arg366, Ser367, and Lys388. Lys337 serves as the catalytic Proton acceptor.

Belongs to the enolase family. Mg(2+) serves as cofactor.

Its subcellular location is the cytoplasm. It is found in the secreted. The protein resides in the cell surface. It carries out the reaction (2R)-2-phosphoglycerate = phosphoenolpyruvate + H2O. It participates in carbohydrate degradation; glycolysis; pyruvate from D-glyceraldehyde 3-phosphate: step 4/5. Its function is as follows. Catalyzes the reversible conversion of 2-phosphoglycerate (2-PG) into phosphoenolpyruvate (PEP). It is essential for the degradation of carbohydrates via glycolysis. This is Enolase from Paraburkholderia phymatum (strain DSM 17167 / CIP 108236 / LMG 21445 / STM815) (Burkholderia phymatum).